A 279-amino-acid chain; its full sequence is Histone chaperone ASF1 (279 aa).

The segment at 1–143 (MSIVSLLGIK…HIVRNILAEK (143 aa)) is interaction with HIR1. The interval 1–155 (MSIVSLLGIK…VTRFNIVWDN (155 aa)) is interaction with histone H3, histone H4, RAD53 and the RF-C complex. The disordered stretch occupies residues 156 to 279 (ENEGDLYPPE…TPKDAARSTN (124 aa)). Over residues 168-244 (GVDDEEEEDD…DEEEGEEEVG (77 aa)) the composition is skewed to acidic residues. Residues 192–243 (DDQEDGEGEAEEAAEEEEEEEEKTEDNETNLEEEEEDIENSDGDEEEGEEEV) adopt a coiled-coil conformation. 2 stretches are compositionally biased toward basic and acidic residues: residues 245-254 (SVDKNEDGND) and 269-279 (STPKDAARSTN).

The protein belongs to the ASF1 family. In terms of assembly, interacts with histone H3/H4 heterodimers via both histone H3 and histone H4. Binds with higher affinity to H3/H4 heterodimers where histone H3 has been pre-acetylated on 'Lys-14'. Interacts with RAD53 and this may impair interaction with histones and chromatin assembly; the interaction is reduced upon activation of DNA damage or replication checkpoints which in turn promotes histone binding and chromatin assembly. Interacts with the CAC2 subunit of chromatin assembly factor 1 (CAF-1). Interacts with the HIR1, HIR2, HIR3 and HPC2 subunits of the HIR complex. Interacts with the RFC1, RFC2, RFC3, RFC4 and RFC5 subunits of the replication factor C (RF-C/RFC) complex; which may recruit this protein to DNA. Interacts with the SAS2, SAS4 and SAS5 subunits of the SAS/SAS-I complex. Interacts with the BDF1, BDF2, SPT15, TAF1 and TAF7 subunits of the TFIID complex. Interacts with RTT109 and VPS75; the interaction with RTT109 is direct.

It is found in the nucleus. Histone chaperone that facilitates histone deposition and histone exchange and removal during nucleosome assembly and disassembly. Facilitates histone deposition through both replication-dependent and replication-independent chromatin assembly pathways. Cooperates with chromatin assembly factor 1 (CAF-1) to promote replication-dependent chromatin assembly and with the HIR complex to promote replication-independent chromatin assembly, which may occur during transcription and DNA repair. May be required for the maintenance of a subset of replication elongation factors, including DNA polymerase epsilon, the RFC complex and PCNA, at stalled replication forks. Also required for RTT109-dependent acetylation of histone H3 on 'Lys-9' and 'Lys-56'. Promotion of RTT109-mediated histone H3 'Lys-56' acetylation is dependent on interactions with histone H3 pre-acetylated on 'Lys-14'. This chain is Histone chaperone ASF1, found in Saccharomyces cerevisiae (strain ATCC 204508 / S288c) (Baker's yeast).